Reading from the N-terminus, the 332-residue chain is tRNA U34 carboxymethyltransferase (332 aa).

Residues K96, W110, K115, G135, 157 to 159, 190 to 191, M205, Y209, and R324 contribute to the carboxy-S-adenosyl-L-methionine site; these read DPT and IE.

It belongs to the class I-like SAM-binding methyltransferase superfamily. CmoB family. In terms of assembly, homotetramer.

It catalyses the reaction carboxy-S-adenosyl-L-methionine + 5-hydroxyuridine(34) in tRNA = 5-carboxymethoxyuridine(34) in tRNA + S-adenosyl-L-homocysteine + H(+). In terms of biological role, catalyzes carboxymethyl transfer from carboxy-S-adenosyl-L-methionine (Cx-SAM) to 5-hydroxyuridine (ho5U) to form 5-carboxymethoxyuridine (cmo5U) at position 34 in tRNAs. The chain is tRNA U34 carboxymethyltransferase from Alteromonas mediterranea (strain DSM 17117 / CIP 110805 / LMG 28347 / Deep ecotype).